A 192-amino-acid polypeptide reads, in one-letter code: Erythropoietin (192 aa).

An N-terminal signal peptide occupies residues 1–26 (MGVPDCLALPLLVTFLLLSLGLPVLG). The cysteines at positions 33 and 187 are disulfide-linked. N-linked (GlcNAc...) asparagine glycosylation is found at Asn-50, Asn-64, and Asn-109.

Belongs to the EPO/TPO family.

The protein resides in the secreted. Its function is as follows. Hormone involved in the regulation of erythrocyte proliferation and differentiation and the maintenance of a physiological level of circulating erythrocyte mass. Binds to EPOR leading to EPOR dimerization and JAK2 activation thereby activating specific downstream effectors, including STAT1 and STAT3. In Nannospalax galili (Northern Israeli blind subterranean mole rat), this protein is Erythropoietin (EPO).